The primary structure comprises 167 residues: MSVKPIDNYITNSVRLFEVNPSQTLFSISYKPPTQKTDTKVSFRTHNSHLSLNYKFTTNKSKDVSRLLSALGPRGVSITPGKIEKIAQSKKKNNKIKESSKKIKGKSIQDIVGLATLIVNTDVEKSDPAAKKTATEPKQKANAVQNNNGNSAASKKKKNKNKGKKKR.

Ser2 carries the post-translational modification N-acetylserine. Residues 123–139 (VEKSDPAAKKTATEPKQ) are compositionally biased toward basic and acidic residues. The segment at 123-167 (VEKSDPAAKKTATEPKQKANAVQNNNGNSAASKKKKNKNKGKKKR) is disordered. Over residues 154 to 167 (SKKKKNKNKGKKKR) the composition is skewed to basic residues.

Fungal signal recognition particle (SRP) complex consists of a 7S RNA molecule (scR1) and at least six protein subunits: SRP72, SRP68, SRP54, SEC65, SRP21 and SRP14. At least SRP14, SRP21, SRP68 and SRP72 are proposed to get assembled together with scR1 RNA as a pre-SRP complex in the nucleolus which is exported to the cytoplasm.

It localises to the cytoplasm. Its subcellular location is the nucleus. Signal-recognition-particle (SRP) assembly has a crucial role in targeting secretory proteins to the rough endoplasmic reticulum (ER) membrane. SRP is required for the cotranslational protein translocation for ER import and preferentially recognizes strongly hydrophobic signal sequences. It is involved in targeting the nascent chain-ribosome (RNC) complex to the ER and is proposed to participate in the arrest of nascent chain elongation during membrane targeting. The polypeptide is Signal recognition particle subunit SRP21 (SRP21) (Saccharomyces cerevisiae (strain ATCC 204508 / S288c) (Baker's yeast)).